We begin with the raw amino-acid sequence, 190 residues long: Thymidylate kinase (190 aa).

7–14 (GVDTCGKS) serves as a coordination point for ATP.

It belongs to the thymidylate kinase family.

It carries out the reaction dTMP + ATP = dTDP + ADP. Functionally, phosphorylation of dTMP to form dTDP in both de novo and salvage pathways of dTTP synthesis. The chain is Thymidylate kinase from Wolinella succinogenes (strain ATCC 29543 / DSM 1740 / CCUG 13145 / JCM 31913 / LMG 7466 / NCTC 11488 / FDC 602W) (Vibrio succinogenes).